The following is a 171-amino-acid chain: Protein-export protein SecB (171 aa).

Belongs to the SecB family. In terms of assembly, homotetramer, a dimer of dimers. One homotetramer interacts with 1 SecA dimer.

Its subcellular location is the cytoplasm. Its function is as follows. One of the proteins required for the normal export of preproteins out of the cell cytoplasm. It is a molecular chaperone that binds to a subset of precursor proteins, maintaining them in a translocation-competent state. It also specifically binds to its receptor SecA. The protein is Protein-export protein SecB of Xanthomonas oryzae pv. oryzae (strain MAFF 311018).